The chain runs to 227 residues: MSALLKASRNDAIIARCLQTISQLIPLTSAVFYRVNNRLKPENYILHNISDNTHQQYLENFQPLDPLLPSHFSHQNTTVAAMTPRLCDRNRHYYHEFMLPNNVRDMTEIFIRRERRIVAGISLMRDVPFSSEERQRAQAVLPLVELAIRDCLQEEDDLPAILTAKEREIVGMVREGASNKLIARQLDISLSTVKTHLRNIFAKTEVVNRTELVSRTWMPAAQRTLHL.

Residues 155–220 (EDDLPAILTA…ELVSRTWMPA (66 aa)) form the HTH luxR-type domain. The H-T-H motif DNA-binding region spans 179 to 198 (NKLIARQLDISLSTVKTHLR).

In terms of biological role, positive regulatory protein for the induction of arylsulfatase synthesis (maoA), tyramine oxidase (tynA), maoC, maoE/F operon, and atsB/A operon which are all regulated by monoamines, and included under the common term of monoamine regulon. This Klebsiella aerogenes (Enterobacter aerogenes) protein is Monoamine regulon transcriptional regulator (moaR).